A 354-amino-acid chain; its full sequence is 2-methylisoborneol synthase (354 aa).

The disordered stretch occupies residues 1 to 29 (MIELIGHETPVPSQQQHTGGVRGTSACTP). Mg(2+) is bound by residues Asp113, Asp114, Glu118, Asn264, Ser268, and Glu272.

It belongs to the terpene synthase family. 2-methylisoborneol synthase subfamily. Mg(2+) is required as a cofactor.

It carries out the reaction (E)-2-methylgeranyl diphosphate + H2O = 2-methylisoborneol + diphosphate. In terms of biological role, catalyzes the cyclization of 2-methylgeranyl diphosphate (2-MeGPP) to 2-methylisoborneol (2-MIB), which likely involves the intermediacy of 2-methyllinalyl diphosphate. The polypeptide is 2-methylisoborneol synthase (Saccharopolyspora erythraea (strain ATCC 11635 / DSM 40517 / JCM 4748 / NBRC 13426 / NCIMB 8594 / NRRL 2338)).